We begin with the raw amino-acid sequence, 561 residues long: DNA ligase B (561 aa).

Lysine 125 (N6-AMP-lysine intermediate) is an active-site residue.

The protein belongs to the NAD-dependent DNA ligase family. LigB subfamily.

The enzyme catalyses NAD(+) + (deoxyribonucleotide)n-3'-hydroxyl + 5'-phospho-(deoxyribonucleotide)m = (deoxyribonucleotide)n+m + AMP + beta-nicotinamide D-nucleotide.. Catalyzes the formation of phosphodiester linkages between 5'-phosphoryl and 3'-hydroxyl groups in double-stranded DNA using NAD as a coenzyme and as the energy source for the reaction. The chain is DNA ligase B from Salmonella choleraesuis (strain SC-B67).